The sequence spans 185 residues: RRM domain-containing protein ECU09_1470 (185 aa).

RRM domains are found at residues 8 to 87 (NQLA…YAKR) and 101 to 170 (KKVY…PAYE).

The sequence is that of RRM domain-containing protein ECU09_1470 from Encephalitozoon cuniculi (strain GB-M1) (Microsporidian parasite).